Reading from the N-terminus, the 358-residue chain is scyllo-inositol 2-dehydrogenase (NADP(+)) IolW (358 aa).

Belongs to the Gfo/Idh/MocA family.

It catalyses the reaction scyllo-inositol + NADP(+) = scyllo-inosose + NADPH + H(+). Catalyzes the reversible NADPH-dependent reduction of scyllo-inosose (SIS) to scyllo-inositol (SI). Cannot use NADH instead of NADPH. May be involved in reduction of not only SIS but also various oxidized compounds manifested upon stressful conditions. This chain is scyllo-inositol 2-dehydrogenase (NADP(+)) IolW, found in Bacillus subtilis (strain 168).